Reading from the N-terminus, the 218-residue chain is ATP phosphoribosyltransferase (218 aa).

The protein belongs to the ATP phosphoribosyltransferase family. Short subfamily. Heteromultimer composed of HisG and HisZ subunits.

It is found in the cytoplasm. It carries out the reaction 1-(5-phospho-beta-D-ribosyl)-ATP + diphosphate = 5-phospho-alpha-D-ribose 1-diphosphate + ATP. Its pathway is amino-acid biosynthesis; L-histidine biosynthesis; L-histidine from 5-phospho-alpha-D-ribose 1-diphosphate: step 1/9. Functionally, catalyzes the condensation of ATP and 5-phosphoribose 1-diphosphate to form N'-(5'-phosphoribosyl)-ATP (PR-ATP). Has a crucial role in the pathway because the rate of histidine biosynthesis seems to be controlled primarily by regulation of HisG enzymatic activity. The sequence is that of ATP phosphoribosyltransferase from Burkholderia thailandensis (strain ATCC 700388 / DSM 13276 / CCUG 48851 / CIP 106301 / E264).